The sequence spans 494 residues: Catalase (494 aa).

Active-site residues include His65 and Asn138. Tyr348 provides a ligand contact to heme.

It belongs to the catalase family. Homotetramer. It depends on heme as a cofactor.

It localises to the cytoplasm. It is found in the cytosol. The protein localises to the peroxisome matrix. It carries out the reaction 2 H2O2 = O2 + 2 H2O. Its function is as follows. Catalyzes the degradation of hydrogen peroxide (H(2)O(2)) generated by peroxisomal oxidases to water and oxygen, thereby protecting cells from the toxic effects of hydrogen peroxide. In Pisum sativum (Garden pea), this protein is Catalase.